A 383-amino-acid chain; its full sequence is Chaperone protein DnaJ (383 aa).

One can recognise a J domain in the interval 6–70; the sequence is DYYDVLGVGR…QKRAAYDQYG (65 aa). A CR-type zinc finger spans residues 140–222; it reads GKETKISYSR…CHGTGREEER (83 aa). Zn(2+)-binding residues include Cys153, Cys156, Cys170, Cys173, Cys196, Cys199, Cys210, and Cys213. CXXCXGXG motif repeat units lie at residues 153–160, 170–177, 196–203, and 210–217; these read CHTCHGSG, CHKCHGAG, CDVCGGTG, and CDTCHGTG.

The protein belongs to the DnaJ family. In terms of assembly, homodimer. Zn(2+) serves as cofactor.

The protein localises to the cytoplasm. In terms of biological role, participates actively in the response to hyperosmotic and heat shock by preventing the aggregation of stress-denatured proteins and by disaggregating proteins, also in an autonomous, DnaK-independent fashion. Unfolded proteins bind initially to DnaJ; upon interaction with the DnaJ-bound protein, DnaK hydrolyzes its bound ATP, resulting in the formation of a stable complex. GrpE releases ADP from DnaK; ATP binding to DnaK triggers the release of the substrate protein, thus completing the reaction cycle. Several rounds of ATP-dependent interactions between DnaJ, DnaK and GrpE are required for fully efficient folding. Also involved, together with DnaK and GrpE, in the DNA replication of plasmids through activation of initiation proteins. This Latilactobacillus sakei (Lactobacillus sakei) protein is Chaperone protein DnaJ.